Here is a 159-residue protein sequence, read N- to C-terminus: Adult-specific rigid cuticular protein 15.7 (159 aa).

The region spanning 23–89 (LGNYAFNYGI…SIKTNEPGTA (67 aa)) is the Chitin-binding type R&amp;R domain.

In terms of biological role, component of the rigid cuticle of the spider. This Araneus diadematus (European garden spider) protein is Adult-specific rigid cuticular protein 15.7.